A 622-amino-acid polypeptide reads, in one-letter code: SLAIN motif-containing protein-like (622 aa).

The stretch at 34–60 forms a coiled coil; sequence DLKEVQKLHELVKRLEIQNQQLKIKRN. Disordered regions lie at residues 404 to 441 and 473 to 622; these read HRYS…IQNH and VRSS…DGCY. Positions 405-415 are enriched in low complexity; sequence RYSPSPLSSPR. 4 stretches are compositionally biased toward polar residues: residues 416 to 430, 484 to 502, 525 to 591, and 599 to 611; these read CQSP…TTSR, QGPS…STPP, VSTS…STVP, and SRRS…MNST.

This sequence belongs to the SLAIN motif-containing family.

This chain is SLAIN motif-containing protein-like, found in Xenopus tropicalis (Western clawed frog).